The chain runs to 221 residues: Leucine rich adaptor protein 1-like (221 aa).

Met-1 carries the post-translational modification N-acetylmethionine. Positions 24–81 are disordered; the sequence is LARSLRGEELAPREGAADPSGVGGSCSSSSSCSSFAPSVSSSSSSSPASGSPRRSHPS. Residues 28–39 show a composition bias toward basic and acidic residues; sequence LRGEELAPREGA. A compositionally biased stretch (low complexity) spans 48–75; it reads SCSSSSSCSSFAPSVSSSSSSSPASGSP.

The protein is Leucine rich adaptor protein 1-like (Lurap1l) of Mus musculus (Mouse).